A 303-amino-acid polypeptide reads, in one-letter code: Mevalonate kinase (303 aa).

90–100 (PAGSGLGSSAA) lines the ATP pocket. The Proton acceptor role is filled by Asp141.

The protein belongs to the GHMP kinase family. Mevalonate kinase subfamily. Homodimer. The cofactor is Mg(2+).

Its subcellular location is the cytoplasm. The enzyme catalyses (R)-mevalonate + ATP = (R)-5-phosphomevalonate + ADP + H(+). Its pathway is isoprenoid biosynthesis; isopentenyl diphosphate biosynthesis via mevalonate pathway; isopentenyl diphosphate from (R)-mevalonate: step 1/3. Its function is as follows. Catalyzes the phosphorylation of (R)-mevalonate (MVA) to (R)-mevalonate 5-phosphate (MVAP). Functions in the mevalonate (MVA) pathway leading to isopentenyl diphosphate (IPP), a key precursor for the biosynthesis of isoprenoid compounds such as archaeal membrane lipids. This is Mevalonate kinase from Methanothermobacter thermautotrophicus (strain ATCC 29096 / DSM 1053 / JCM 10044 / NBRC 100330 / Delta H) (Methanobacterium thermoautotrophicum).